The chain runs to 246 residues: Short chain dehydrogenase/reductase dmxR12 (246 aa).

NADP(+)-binding residues include Ile15, Ser34, Lys125, and Lys164. Lys164 serves as the catalytic Lowers pKa of active site Tyr.

It belongs to the short-chain dehydrogenases/reductases (SDR) family.

It participates in secondary metabolite biosynthesis. Short chain dehydrogenase/reductase; part of the gene cluster that mediates the biosynthesis of the dimeric xanthones cryptosporioptides. The pathway begins with the synthesis of atrochrysone thioester by the polyketide synthase dmx-nrPKS. The atrochrysone carboxyl ACP thioesterase dmxR1 then breaks the thioester bond and releases the atrochrysone carboxylic acid from dmx-nrPKS. Atrochrysone carboxylic acid is decarboxylated by the decarboxylase dmxR15, and oxidized by the anthrone oxygenase dmxR16 to yield emodin. Emodin is then reduced to emodin hydroquinone by the oxidoreductase dmxR7. A-ring reduction by the short chain dehydrogenase dmxR18, dehydration by the scytalone dehydratase-like protein dmxR17 and probable spontaneous re-oxidation, results in overall deoxygenation to chrysophanol. Baeyer-Villiger oxidation by the Baeyer-Villiger monooxygenase (BVMO) dmxR6 then yields monodictylactone in equilibrium with monodictyphenone. In the case of the cryptosporioptides biosynthesis, monodictylactone is reduced at C-12 to an alcohol (by the short chain dehydrogenases dmxR12 or dmxR8) and hydroxylated at C-5 by dmxR9, yielding the electron-rich aromatic which could eliminate H(2)O to form the ortho-quinonemethide, followed by tautomerisation to paraquinone and complete the formal reduction to produce the 10-methylgroup. Conjugate addition of C-4a-OH to the resulting paraquinone by the monooxygenase dmxR10 then gives cyclohexadienone, which is then reduced at C-5 by the short chain dehydrogenase dmxR3 to give the dihydroxanthone. The 6,7-epoxide in the cryptosporioptides could be introduced by the cytochrome P450 monooxygenase dmxL3. The highly reducing PKS dmxL2 manufactures butyrate, which is further carboxylated by dmxL1 to form ethylmalonate. It is not yet clear whether the carboxylation occurs while the butyrate is attached to the ACP of dmxL2, but this unusual fungal metabolite could then be esterified to O-5 by the O-acetyltransferase dmxR13. Finally, dimerization performed by dmxR5 gives the observed dimers cryptosporioptides A, B and C as the final products of the pathway. In Cryptosporiopsis sp. (strain 8999), this protein is Short chain dehydrogenase/reductase dmxR12.